A 924-amino-acid polypeptide reads, in one-letter code: Inositol polyphosphate 4-phosphatase type II (924 aa).

Positions 1-13 (MEIKEEGASEEGQ) are enriched in basic and acidic residues. Disordered regions lie at residues 1-24 (MEIKEEGASEEGQHFLPTAQANDP), 481-516 (ILKKPPSPKSSTEESSPQDQPPVMRGQDSIPHHSDY), and 546-570 (DGGSEGSGGNNDGEKEPSLTDAIPS). Positions 23-165 (DPGDCQFTSI…LKSKEQLLVL (143 aa)) constitute a C2 domain.

Belongs to the inositol 3,4-bisphosphate 4-phosphatase family. Widely expressed with highest levels occurring in the skeletal muscle and heart.

The catalysed reaction is a 1,2-diacyl-sn-glycero-3-phospho-(1D-myo-inositol-3,4-bisphosphate) + H2O = a 1,2-diacyl-sn-glycero-3-phospho-(1D-myo-inositol-3-phosphate) + phosphate. The enzyme catalyses 1D-myo-inositol 1,3,4-trisphosphate + H2O = 1D-myo-inositol 1,3-bisphosphate + phosphate. It carries out the reaction 1D-myo-inositol 3,4-bisphosphate + H2O = 1D-myo-inositol 3-phosphate + phosphate. The protein operates within signal transduction; phosphatidylinositol signaling pathway. With respect to regulation, strongly inhibited by inositol hexakisphosphate. Catalyzes the hydrolysis of the 4-position phosphate of phosphatidylinositol 3,4-bisphosphate, inositol 1,3,4-trisphosphate and inositol 3,4-trisphosphate. Plays a role in the late stages of macropinocytosis by dephosphorylating phosphatidylinositol 3,4-bisphosphate in membrane ruffles. The lipid phosphatase activity is critical for tumor suppressor function. Antagonizes the PI3K-AKT/PKB signaling pathway by dephosphorylating phosphoinositides and thereby modulating cell cycle progression and cell survival. The protein is Inositol polyphosphate 4-phosphatase type II (INPP4B) of Homo sapiens (Human).